A 366-amino-acid polypeptide reads, in one-letter code: UDP-N-acetylglucosamine--N-acetylmuramyl-(pentapeptide) pyrophosphoryl-undecaprenol N-acetylglucosamine transferase (366 aa).

UDP-N-acetyl-alpha-D-glucosamine is bound by residues 14-16, Asn-125, Arg-168, Ser-196, and Gln-297; that span reads TGG.

Belongs to the glycosyltransferase 28 family. MurG subfamily.

It is found in the cell inner membrane. The catalysed reaction is di-trans,octa-cis-undecaprenyl diphospho-N-acetyl-alpha-D-muramoyl-L-alanyl-D-glutamyl-meso-2,6-diaminopimeloyl-D-alanyl-D-alanine + UDP-N-acetyl-alpha-D-glucosamine = di-trans,octa-cis-undecaprenyl diphospho-[N-acetyl-alpha-D-glucosaminyl-(1-&gt;4)]-N-acetyl-alpha-D-muramoyl-L-alanyl-D-glutamyl-meso-2,6-diaminopimeloyl-D-alanyl-D-alanine + UDP + H(+). The protein operates within cell wall biogenesis; peptidoglycan biosynthesis. Functionally, cell wall formation. Catalyzes the transfer of a GlcNAc subunit on undecaprenyl-pyrophosphoryl-MurNAc-pentapeptide (lipid intermediate I) to form undecaprenyl-pyrophosphoryl-MurNAc-(pentapeptide)GlcNAc (lipid intermediate II). The sequence is that of UDP-N-acetylglucosamine--N-acetylmuramyl-(pentapeptide) pyrophosphoryl-undecaprenol N-acetylglucosamine transferase from Rhodopseudomonas palustris (strain BisB5).